The sequence spans 207 residues: ATP phosphoribosyltransferase (207 aa).

Belongs to the ATP phosphoribosyltransferase family. Short subfamily. Heteromultimer composed of HisG and HisZ subunits.

The protein localises to the cytoplasm. It carries out the reaction 1-(5-phospho-beta-D-ribosyl)-ATP + diphosphate = 5-phospho-alpha-D-ribose 1-diphosphate + ATP. Its pathway is amino-acid biosynthesis; L-histidine biosynthesis; L-histidine from 5-phospho-alpha-D-ribose 1-diphosphate: step 1/9. Its function is as follows. Catalyzes the condensation of ATP and 5-phosphoribose 1-diphosphate to form N'-(5'-phosphoribosyl)-ATP (PR-ATP). Has a crucial role in the pathway because the rate of histidine biosynthesis seems to be controlled primarily by regulation of HisG enzymatic activity. The sequence is that of ATP phosphoribosyltransferase from Dictyoglomus thermophilum (strain ATCC 35947 / DSM 3960 / H-6-12).